The sequence spans 164 residues: MIRKLDDFDIKILDLLQHDATATMAELSEKTGLSANACWRRIRLLEADGVIKNRVTLLDPQKIGLGITVFVCIRCAEHSQDWLDNFLQIVNESPEVIEFYRLAGDIDYLLKLQVASISEYDRLYKKLVSRVKLTDVSAIFSMEELKHSTILPLPETSDKAERKV.

The region spanning leucine 5 to glycine 66 is the HTH asnC-type domain. A DNA-binding region (H-T-H motif) is located at residues methionine 24–arginine 43.

Functionally, represses the secondary, H(+)-coupled glutamate uptake system (Gluemp) genes. The protein is Glutamate uptake regulatory protein (grp) of Zymomonas mobilis subsp. mobilis (strain ATCC 10988 / DSM 424 / LMG 404 / NCIMB 8938 / NRRL B-806 / ZM1).